The primary structure comprises 1169 residues: Protein MBD-R2 (1169 aa).

A THAP-type zinc finger spans residues 5 to 59 (CCVANCPSTSRLLEHNGVTYHSFPLDPIIRAIWIKNSRISLERQITKSVLVCSRH). Disordered stretches follow at residues 99 to 122 (RALQ…STND), 140 to 211 (SAER…KYSN), and 347 to 394 (AEEG…CAPQ). Over residues 107–122 (EGTTETPGNAQSSTND) the composition is skewed to polar residues. The span at 140–160 (SAERKATEEGKTGKAADDVKN) shows a compositional bias: basic and acidic residues. The span at 190-202 (PAPGSASSSNSPL) shows a compositional bias: low complexity. Positions 353–363 (KSPTPVGTPVS) are enriched in polar residues. An MBD domain is found at 445-514 (KPTVIVQDWR…DVYDFSIHRR (70 aa)). The tract at residues 527–565 (GYNPQPPPKPRPMDVSMNSTLDQSITSQHSLPSTPMPVK) is disordered. Residues 542 to 559 (SMNSTLDQSITSQHSLPS) show a composition bias toward polar residues. The C2H2-type zinc finger occupies 640-665 (YVCPREDCAKTYRKEDFLLIHIRHYH). The segment at 714–890 (QDLQQSRSFK…INAALAPPPA (177 aa)) is disordered. The segment covering 726-742 (SVSATATSSTPSDITPT) has biased composition (low complexity). Over residues 774-784 (PTQSFNPSLSR) the composition is skewed to polar residues. Positions 798-810 (SGSRKSNRQRSQR) are enriched in basic residues. Polar residues-rich tracts occupy residues 853-862 (AATTPISSID) and 869-881 (SVST…QTDI).

In terms of assembly, component of the non-specific lethal (NLS) histone acetyltransferase complex at least composed of mof, nls1, dgt1/NSL2, Rcd1/NSL3, Rcd5/MCRS2, MBD-R2 and wds.

The protein localises to the nucleus. It is found in the chromosome. Component of the non-specific lethal (NLS) complex, a multiprotein complex that promotes expression of housekeeping genes on X chromosome and autosomes. This Drosophila melanogaster (Fruit fly) protein is Protein MBD-R2.